The sequence spans 306 residues: D-alanine--D-alanine ligase (306 aa).

Residues 102–300 (KIIAASAGVS…YGDIVKWIVE (199 aa)) enclose the ATP-grasp domain. ATP is bound at residue 128-183 (PMKPPYVIKPIREGSSFGVVIVGSDETMPLHDIMNNEWVYDDEIMVEKYVPGRELT). 3 residues coordinate Mg(2+): Asp-253, Glu-267, and Asn-269.

Belongs to the D-alanine--D-alanine ligase family. Mg(2+) is required as a cofactor. Mn(2+) serves as cofactor.

It is found in the cytoplasm. It carries out the reaction 2 D-alanine + ATP = D-alanyl-D-alanine + ADP + phosphate + H(+). It participates in cell wall biogenesis; peptidoglycan biosynthesis. In terms of biological role, cell wall formation. The chain is D-alanine--D-alanine ligase from Bartonella bacilliformis (strain ATCC 35685 / KC583 / Herrer 020/F12,63).